A 1095-amino-acid polypeptide reads, in one-letter code: 1-phosphatidylinositol 4,5-bisphosphate phosphodiesterase (1095 aa).

The PI-PLC X-box domain maps to Met-319–Lys-469. Active-site residues include His-334 and His-381. Lys-467 and Lys-469 together coordinate substrate. Residues Glu-487–Gly-529 form a disordered region. Low complexity predominate over residues Ala-500 to Ala-523. A PI-PLC Y-box domain is found at Leu-550 to Arg-666. Substrate contacts are provided by Ser-579 and Arg-606. One can recognise a C2 domain in the interval Arg-666 to Met-794. 2 disordered regions span residues Ile-842–Glu-863 and Gln-1000–Lys-1030. 2 stretches are compositionally biased toward basic and acidic residues: residues Asp-852 to Glu-863 and Thr-1007 to Lys-1030.

As to quaternary structure, interacts with inaD. Abundantly expressed in the adult retina.

It catalyses the reaction a 1,2-diacyl-sn-glycero-3-phospho-(1D-myo-inositol-4,5-bisphosphate) + H2O = 1D-myo-inositol 1,4,5-trisphosphate + a 1,2-diacyl-sn-glycerol + H(+). The production of the second messenger molecules diacylglycerol (DAG) and inositol 1,4,5-trisphosphate (IP3) is mediated by activated phosphatidylinositol-specific phospholipase C enzymes. Essential component of the phototransduction pathway. Essential downstream component of a hh-signaling pathway which regulates the Duox-dependent gut immune response to bacterial uracil; required for the activation of Cad99C and consequently Cad99C-dependent endosome formation, which is essential for the Duox-dependent production of reactive oxygen species (ROS) in response to intestinal bacterial infection. This Drosophila melanogaster (Fruit fly) protein is 1-phosphatidylinositol 4,5-bisphosphate phosphodiesterase.